A 244-amino-acid chain; its full sequence is uncharacterized protein (244 aa).

The GP-PDE domain maps to 5–244; it reads QLLLAHRGYS…ANKKFEIKIN (240 aa).

It to glycerophosphoryl diester phosphodiesterases (EC 3.1.4.46). This sequence to M.genitalium MG385.

This is an uncharacterized protein from Mycoplasma genitalium (strain ATCC 33530 / DSM 19775 / NCTC 10195 / G37) (Mycoplasmoides genitalium).